The primary structure comprises 501 residues: Aspartate--tRNA ligase, cytoplasmic (501 aa).

Thr-52 is subject to Phosphothreonine. Residue Lys-74 is modified to N6-acetyllysine. Glu-229 contributes to the L-aspartate binding site. The residue at position 249 (Ser-249) is a Phosphoserine. An aspartate region spans residues 251–254 (QLYK). Arg-273 is an L-aspartate binding site. ATP-binding positions include 273 to 275 (RAE) and 281 to 283 (RHL). At Lys-374 the chain carries N6-acetyllysine. The interval 411–415 (KQSNS) is binding site for the 3'-end of tRNA. Glu-424 lines the ATP pocket. Ser-427 and Arg-431 together coordinate L-aspartate. ATP is bound at residue 472 to 475 (GLER). Thr-500 bears the Phosphothreonine; by PKA mark.

Belongs to the class-II aminoacyl-tRNA synthetase family. Type 2 subfamily. In terms of assembly, homodimer. Part of a multisubunit complex that groups tRNA ligases for Arg (RARS1), Asp (DARS1), Gln (QARS1), Ile (IARS1), Leu (LARS1), Lys (KARS1), Met (MARS1) the bifunctional ligase for Glu and Pro (EPRS1) and the auxiliary subunits AIMP1/p43, AIMP2/p38 and EEF1E1/p18.

It localises to the cytoplasm. It catalyses the reaction tRNA(Asp) + L-aspartate + ATP = L-aspartyl-tRNA(Asp) + AMP + diphosphate. Its function is as follows. Catalyzes the specific attachment of an amino acid to its cognate tRNA in a 2 step reaction: the amino acid (AA) is first activated by ATP to form AA-AMP and then transferred to the acceptor end of the tRNA. This chain is Aspartate--tRNA ligase, cytoplasmic (DARS1), found in Bos taurus (Bovine).